The chain runs to 632 residues: MTINYNLAVSTSKPWTLFKLLLKWRGSIWKAVILELAVWLVLYGILSVIYRTALNPGQQRTFERIVQYCDSRLSYIPLNFMLGFFVTAVVNRWTYLYQIIGFIDNIGLMAAEYVRGRTEQARMYRRNIVRYCELAQVLVFRDISMRTRRRFPTLDTVVAAGFMMPHEKDRFDEIQYKYSKYWVPFQWAFSLTYEARKKGLIESDYYQVVVQDEIKKFRTGLAWICNYDWVPIPIMYPQLVCLAVHTYFLVCLLARQYVVSEHADNKTEIDLYFPIMSTLQFIFYMGWMKVAEAMLNPFGEDDDDFECNALIDRNITMVLMMVDQGYDRAPDLKRDDFWDEEVEPLYSEETAKIPNNPLKGSVSDVKLPEYVHEIKMVPHCDDASPLVPGDEMRRRRVSVVPVKPSDQQHHHHGHRTRTSLGNIEMFRSFKNKIERSFSKPHLHDDLGRKTFSHGMLENMEFEGSNTNIADGSHANNNSFTNSAFVNSGEDLSNKRIDTSSSQPQLATGKRGSEHPFQHHVLDDVLEDDESDENQLTIRKKSSVLQPAITLVERFNEATGQLETEVKRDEKKKKEEELREEGDNGKEEKDNKEDKKEEQDRPSRPTRPFFIGVVRSESEDHSHPHLRPPTKFE.

A run of 4 helical transmembrane segments spans residues 28–48 (IWKAVILELAVWLVLYGILSV), 83–103 (GFFVTAVVNRWTYLYQIIGFI), 234–254 (IMYPQLVCLAVHTYFLVCLLA), and 271–291 (LYFPIMSTLQFIFYMGWMKVA). Disordered regions lie at residues 491–516 (LSNKRIDTSSSQPQLATGKRGSEHPF) and 562–632 (ETEV…TKFE). The span at 563 to 602 (TEVKRDEKKKKEEELREEGDNGKEEKDNKEDKKEEQDRPS) shows a compositional bias: basic and acidic residues. The segment covering 623–632 (PHLRPPTKFE) has biased composition (basic residues).

Belongs to the anion channel-forming bestrophin (TC 1.A.46) family. Calcium-sensitive chloride channel subfamily. As to quaternary structure, forms oligomers.

Its subcellular location is the cell membrane. Its function is as follows. Forms chloride channels. The polypeptide is Bestrophin homolog 24 (best-24) (Caenorhabditis elegans).